Consider the following 523-residue polypeptide: 2-isopropylmalate synthase (523 aa).

Residues 12-274 (VVIFDTTLRD…WNKIDTTQLT (263 aa)) form the Pyruvate carboxyltransferase domain. Mn(2+) is bound by residues Asp-21, His-209, His-211, and Asn-245. Residues 398–523 (KLLSLSVIAG…AQGAAAAAAS (126 aa)) are regulatory domain.

The protein belongs to the alpha-IPM synthase/homocitrate synthase family. LeuA type 1 subfamily. In terms of assembly, homodimer. Mn(2+) serves as cofactor.

It is found in the cytoplasm. The enzyme catalyses 3-methyl-2-oxobutanoate + acetyl-CoA + H2O = (2S)-2-isopropylmalate + CoA + H(+). Its pathway is amino-acid biosynthesis; L-leucine biosynthesis; L-leucine from 3-methyl-2-oxobutanoate: step 1/4. Its function is as follows. Catalyzes the condensation of the acetyl group of acetyl-CoA with 3-methyl-2-oxobutanoate (2-ketoisovalerate) to form 3-carboxy-3-hydroxy-4-methylpentanoate (2-isopropylmalate). This chain is 2-isopropylmalate synthase, found in Bradyrhizobium sp. (strain BTAi1 / ATCC BAA-1182).